The sequence spans 510 residues: Probable inorganic carbon transporter subunit DabB (510 aa).

14 consecutive transmembrane segments (helical) span residues 9-29, 37-57, 68-88, 105-122, 125-145, 158-178, 204-224, 226-246, 266-286, 303-323, 355-375, 382-402, 410-430, and 446-466; these read TLLTLFFIALSASWLSGLLFL, FVHIHIGIAALPSLVSLLALV, WHLDTLAWLMAFFVLTIGLII, YFALFTFTTGVSSVAWLS, LRFMIMCWGATLIGLVLLIGL, ISGYLFTISWIALLSAIIWLF, TGINLLIIVAVMIPAAQWPFQ, WLIESAVAPTPVSAIMHAGLV, QIILLIFSSISVLIGTGISLV, GFMLIQCALGAYLAAVIHLIL, LWMIVGRVLGLFIAIAFWFIT, LVSALILGWSLYFSWKQLVVF, IAGLIVLIGFSLIYFTVHNSL, and APAVIFVICILLFSSVICTFV.

Belongs to the inorganic carbon transporter (TC 9.A.2) DabB family. As to quaternary structure, forms a complex with DabA.

The protein resides in the cell membrane. Its function is as follows. Part of an energy-coupled inorganic carbon pump. Expression of both dabA and dabB (DA2) restores growth in ambient air to E.coli deleted of its carbonic anhydrase genes (called CAfree, deletion of 'can' and 'cynT'). In Bacillus anthracis, this protein is Probable inorganic carbon transporter subunit DabB.